Reading from the N-terminus, the 368-residue chain is Chorismate synthase (368 aa).

NADP(+) contacts are provided by Arg-48 and Arg-54. FMN contacts are provided by residues 125–127 (RSS), 238–239 (NA), Gly-278, 293–297 (KPTSS), and Arg-319.

This sequence belongs to the chorismate synthase family. As to quaternary structure, homotetramer. It depends on FMNH2 as a cofactor.

It catalyses the reaction 5-O-(1-carboxyvinyl)-3-phosphoshikimate = chorismate + phosphate. The protein operates within metabolic intermediate biosynthesis; chorismate biosynthesis; chorismate from D-erythrose 4-phosphate and phosphoenolpyruvate: step 7/7. Functionally, catalyzes the anti-1,4-elimination of the C-3 phosphate and the C-6 proR hydrogen from 5-enolpyruvylshikimate-3-phosphate (EPSP) to yield chorismate, which is the branch point compound that serves as the starting substrate for the three terminal pathways of aromatic amino acid biosynthesis. This reaction introduces a second double bond into the aromatic ring system. In Methylibium petroleiphilum (strain ATCC BAA-1232 / LMG 22953 / PM1), this protein is Chorismate synthase.